The sequence spans 452 residues: Enolase (452 aa).

Glutamine 167 contributes to the (2R)-2-phosphoglycerate binding site. The Proton donor role is filled by glutamate 209. Mg(2+) contacts are provided by aspartate 250, glutamate 307, and aspartate 334. 4 residues coordinate (2R)-2-phosphoglycerate: lysine 359, arginine 388, serine 389, and lysine 410. Lysine 359 serves as the catalytic Proton acceptor.

This sequence belongs to the enolase family. Requires Mg(2+) as cofactor.

The protein localises to the cytoplasm. Its subcellular location is the secreted. The protein resides in the cell surface. The enzyme catalyses (2R)-2-phosphoglycerate = phosphoenolpyruvate + H2O. It participates in carbohydrate degradation; glycolysis; pyruvate from D-glyceraldehyde 3-phosphate: step 4/5. Functionally, catalyzes the reversible conversion of 2-phosphoglycerate (2-PG) into phosphoenolpyruvate (PEP). It is essential for the degradation of carbohydrates via glycolysis. This chain is Enolase, found in Mesomycoplasma hyopneumoniae (strain 232) (Mycoplasma hyopneumoniae).